The following is a 677-amino-acid chain: Methionine--tRNA ligase (677 aa).

A 'HIGH' region motif is present at residues 15-25; the sequence is PYANGSIHLGH. 4 residues coordinate Zn(2+): Cys-146, Cys-149, Cys-159, and Cys-162. A 'KMSKS' region motif is present at residues 333–337; the sequence is KMSKS. Lys-336 serves as a coordination point for ATP. One can recognise a tRNA-binding domain in the interval 575–677; that stretch reads DFAKVDLRVA…DGAKPGQQVK (103 aa).

This sequence belongs to the class-I aminoacyl-tRNA synthetase family. MetG type 1 subfamily. In terms of assembly, homodimer. Zn(2+) is required as a cofactor.

It is found in the cytoplasm. The catalysed reaction is tRNA(Met) + L-methionine + ATP = L-methionyl-tRNA(Met) + AMP + diphosphate. In terms of biological role, is required not only for elongation of protein synthesis but also for the initiation of all mRNA translation through initiator tRNA(fMet) aminoacylation. This is Methionine--tRNA ligase from Salmonella schwarzengrund (strain CVM19633).